The chain runs to 536 residues: Suppressor of cytokine signaling 5 (536 aa).

The required for interaction with IL4R stretch occupies residues 1–50; sequence MDKVGKMWNNFKYRCQNLFGHEGGSRSENVDMNSNRCLSVKEKNISIGDS. The interval 115–175 is disordered; sequence SRHAPWGGKK…SVSSRTVGSR (61 aa). Residues 158–169 show a composition bias toward low complexity; that stretch reads VSSVHDMDSVSS. The SH2 domain occupies 381–476; that stretch reads CYWGVMDRYE…FFEPLLTISL (96 aa). In terms of domain architecture, SOCS box spans 471–520; that stretch reads LLTISLNRTFPFSLQYICRAVICRCTTYDGIDGLPLPSMLQDFLKEYHYK.

In terms of assembly, interacts with IL4R; inhibits IL4 signaling. Interacts with EGFR. Interacts with ELOB and ELOC; mediates EGFR ubiquitination and degradation. In terms of processing, phosphorylated. Phosphorylation is induced by EGF.

It functions in the pathway protein modification; protein ubiquitination. In terms of biological role, SOCS family proteins form part of a classical negative feedback system that regulates cytokine signal transduction. May be a substrate-recognition component of a SCF-like ECS (Elongin BC-CUL2/5-SOCS-box protein) E3 ubiquitin-protein ligase complex which mediates the ubiquitination and subsequent proteasomal degradation of target proteins. Inhibits for instance EGF signaling by mediating the degradation of the EGF receptor/EGFR. Involved in the regulation of T-helper cell differentiation by inhibiting of the IL4 signaling pathway which promotes differentiation into the Th2 phenotype. Can also partially inhibit IL6 and LIF signaling. The sequence is that of Suppressor of cytokine signaling 5 (SOCS5) from Homo sapiens (Human).